We begin with the raw amino-acid sequence, 529 residues long: Nuclear protein localization protein 4 homolog 1 (529 aa).

Positions 129 to 266 constitute an MPN domain; sequence IQIENQELVN…ITEYSMDRHY (138 aa). Residues 499-529 form a RanBP2-type zinc finger; it reads SGGAVWNCGHCTFQNEAARQDCSMCGLPAAD.

This sequence belongs to the NPL4 family. In terms of assembly, forms a complex composed of ubxn-3, ufd-1, npl-4.1 and cdc-48.1; within the complex, interacts with ufd-1 and ubxn-3. Interacts with ufd-1. Interacts with elc-1/elongin C; the interaction may mediate the interaction between the npl-4-ufd-1-cdc-48 complex and the E3 ubiquitin ligase cul-2 complex.

It localises to the cytoplasm. The protein localises to the nucleus. In association with ufd-1 and ATPase cdc-48.1 and/or cdc-48.2, involved in the cytoplasmic elimination of misfolded proteins exported from the ER. This pathway, known as ERAD, prevents the activation of the unfolded protein response (UPR) caused by the accumulation of misfolded proteins in the ER. During S phase and in association with ufd-1, cdc-48.1 and/or cdc-48.2 and ubxn-3, ensures the degradation of DNA licensing factor cdt-1 after the initiation of DNA replication and thus the disassembly of the DNA replication CGM helicase complex by promoting the dissociation from chromatin of several of its components including cdc-45 and sld-5. Regulates ubxn-3 nuclear localization during S phase. This Caenorhabditis elegans protein is Nuclear protein localization protein 4 homolog 1.